The sequence spans 407 residues: Putative F-box protein At5g60560 (407 aa).

Residues 2 to 49 (TMMSDLSEDLVEEILCRVSITSLGAVRSTCKGWYVLSKTRVLCKAETK) form the F-box domain.

The polypeptide is Putative F-box protein At5g60560 (Arabidopsis thaliana (Mouse-ear cress)).